The following is a 204-amino-acid chain: MSSSMDHRVLALAGVAQALQQVRRIAETGHSEAATVRTAVDSVFRVDAATPEGVYGSSADVAPGLRLLHNYFTNQGKDDMLPRLALAVLQLERRFVRDHSTVETVSKGIEAAARQAQTLGDSAHPDVLSALGALYAQTISHLRPKVMVQGNPHYLGQAGVVAEIRALLLAAVRSAVLWRQMGGSLWDFLFAKRAMIEAVARALR.

Belongs to the HflD family.

It is found in the cytoplasm. The protein localises to the cell inner membrane. The sequence is that of High frequency lysogenization protein HflD homolog from Xanthomonas campestris pv. campestris (strain ATCC 33913 / DSM 3586 / NCPPB 528 / LMG 568 / P 25).